The chain runs to 399 residues: 1-deoxy-D-xylulose 5-phosphate reductoisomerase (399 aa).

Residues Thr-13, Gly-14, Ser-15, Ile-16, and Asn-127 each contribute to the NADPH site. Lys-128 contacts 1-deoxy-D-xylulose 5-phosphate. An NADPH-binding site is contributed by Glu-129. Asp-153 serves as a coordination point for Mn(2+). Ser-154, Glu-155, Ser-187, and His-210 together coordinate 1-deoxy-D-xylulose 5-phosphate. A Mn(2+)-binding site is contributed by Glu-155. Gly-216 lines the NADPH pocket. Residues Ser-223, Asn-228, Lys-229, and Glu-232 each coordinate 1-deoxy-D-xylulose 5-phosphate. Mn(2+) is bound at residue Glu-232.

This sequence belongs to the DXR family. The cofactor is Mg(2+). Mn(2+) serves as cofactor.

It catalyses the reaction 2-C-methyl-D-erythritol 4-phosphate + NADP(+) = 1-deoxy-D-xylulose 5-phosphate + NADPH + H(+). It functions in the pathway isoprenoid biosynthesis; isopentenyl diphosphate biosynthesis via DXP pathway; isopentenyl diphosphate from 1-deoxy-D-xylulose 5-phosphate: step 1/6. Functionally, catalyzes the NADPH-dependent rearrangement and reduction of 1-deoxy-D-xylulose-5-phosphate (DXP) to 2-C-methyl-D-erythritol 4-phosphate (MEP). The sequence is that of 1-deoxy-D-xylulose 5-phosphate reductoisomerase from Bordetella pertussis (strain Tohama I / ATCC BAA-589 / NCTC 13251).